Consider the following 940-residue polypeptide: Isoleucine--tRNA ligase (940 aa).

Positions 58-68 match the 'HIGH' region motif; it reads PYANGSIHIGH. Position 564 (glutamate 564) interacts with L-isoleucyl-5'-AMP. Positions 605–609 match the 'KMSKS' region motif; sequence KMSKS. ATP is bound at residue lysine 608. Residues cysteine 903, cysteine 906, cysteine 923, and cysteine 926 each coordinate Zn(2+).

The protein belongs to the class-I aminoacyl-tRNA synthetase family. IleS type 1 subfamily. In terms of assembly, monomer. Zn(2+) serves as cofactor.

The protein resides in the cytoplasm. The enzyme catalyses tRNA(Ile) + L-isoleucine + ATP = L-isoleucyl-tRNA(Ile) + AMP + diphosphate. In terms of biological role, catalyzes the attachment of isoleucine to tRNA(Ile). As IleRS can inadvertently accommodate and process structurally similar amino acids such as valine, to avoid such errors it has two additional distinct tRNA(Ile)-dependent editing activities. One activity is designated as 'pretransfer' editing and involves the hydrolysis of activated Val-AMP. The other activity is designated 'posttransfer' editing and involves deacylation of mischarged Val-tRNA(Ile). The sequence is that of Isoleucine--tRNA ligase from Shewanella baltica (strain OS185).